The primary structure comprises 252 residues: Hydroxyacylglutathione hydrolase (252 aa).

7 residues coordinate Zn(2+): H54, H56, D58, H59, H113, D132, and H170.

Belongs to the metallo-beta-lactamase superfamily. Glyoxalase II family. In terms of assembly, monomer. Zn(2+) serves as cofactor.

It catalyses the reaction an S-(2-hydroxyacyl)glutathione + H2O = a 2-hydroxy carboxylate + glutathione + H(+). The protein operates within secondary metabolite metabolism; methylglyoxal degradation; (R)-lactate from methylglyoxal: step 2/2. Its function is as follows. Thiolesterase that catalyzes the hydrolysis of S-D-lactoyl-glutathione to form glutathione and D-lactic acid. In Gloeobacter violaceus (strain ATCC 29082 / PCC 7421), this protein is Hydroxyacylglutathione hydrolase.